Reading from the N-terminus, the 634-residue chain is Threonine--tRNA ligase (634 aa).

The 61-residue stretch at 1–61 folds into the TGS domain; sequence MINIRFPDGS…NSNCELRLIT (61 aa). The interval 241–532 is catalytic; that stretch reads DHRKIGKVLD…LIEHYAGNLP (292 aa). Zn(2+) contacts are provided by C332, H383, and H509.

The protein belongs to the class-II aminoacyl-tRNA synthetase family. Homodimer. Zn(2+) serves as cofactor.

Its subcellular location is the cytoplasm. The catalysed reaction is tRNA(Thr) + L-threonine + ATP = L-threonyl-tRNA(Thr) + AMP + diphosphate + H(+). Functionally, catalyzes the attachment of threonine to tRNA(Thr) in a two-step reaction: L-threonine is first activated by ATP to form Thr-AMP and then transferred to the acceptor end of tRNA(Thr). Also edits incorrectly charged L-seryl-tRNA(Thr). This is Threonine--tRNA ligase from Francisella tularensis subsp. mediasiatica (strain FSC147).